Consider the following 500-residue polypeptide: NAD(P)H-quinone oxidoreductase subunit 2 B, chloroplastic (500 aa).

Helical transmembrane passes span 14–34 (SILP…IDLT), 41–61 (WLYF…LFQL), 78–98 (FNGI…PLSM), 116–136 (LTAT…IIFI), 166–186 (LLMG…LYGL), 211–231 (ISIV…LVPF), 242–262 (APTS…LALA), 277–297 (WHLI…FIAI), 305–325 (MLAY…IAGD), 335–355 (YMLF…LFGL), 376–396 (ASFL…AGFF), 409–429 (GLYL…YYYL), and 467–487 (IIIC…VIAI).

The protein belongs to the complex I subunit 2 family. As to quaternary structure, NDH is composed of at least 16 different subunits, 5 of which are encoded in the nucleus.

Its subcellular location is the plastid. The protein resides in the chloroplast thylakoid membrane. It carries out the reaction a plastoquinone + NADH + (n+1) H(+)(in) = a plastoquinol + NAD(+) + n H(+)(out). It catalyses the reaction a plastoquinone + NADPH + (n+1) H(+)(in) = a plastoquinol + NADP(+) + n H(+)(out). Its function is as follows. NDH shuttles electrons from NAD(P)H:plastoquinone, via FMN and iron-sulfur (Fe-S) centers, to quinones in the photosynthetic chain and possibly in a chloroplast respiratory chain. The immediate electron acceptor for the enzyme in this species is believed to be plastoquinone. Couples the redox reaction to proton translocation, and thus conserves the redox energy in a proton gradient. The protein is NAD(P)H-quinone oxidoreductase subunit 2 B, chloroplastic of Anthoceros angustus (Hornwort).